Reading from the N-terminus, the 530-residue chain is Pentatricopeptide repeat-containing protein At3g51320 (530 aa).

PPR repeat units follow at residues 82–116 (KLYC…GFVP), 117–151 (DSYT…GCDQ), 152–182 (VLPV…IPKR), 183–217 (DIVS…NIIS), 218–248 (WNIM…GFQG), 249–283 (NEST…FLNS), 284–314 (SVVI…LSIR), 315–349 (NKVT…MLRP), 350–380 (DEVT…MVDE), and 386–420 (NFGH…DVTP). The type E motif stretch occupies residues 424-499 (KWANLLSSSR…IPGCGLVDLK (76 aa)).

It belongs to the PPR family. PCMP-E subfamily.

The chain is Pentatricopeptide repeat-containing protein At3g51320 from Arabidopsis thaliana (Mouse-ear cress).